A 38-amino-acid chain; its full sequence is Large ribosomal subunit protein bL36 (38 aa).

This sequence belongs to the bacterial ribosomal protein bL36 family.

This is Large ribosomal subunit protein bL36 from Buchnera aphidicola subsp. Acyrthosiphon pisum (strain 5A).